Reading from the N-terminus, the 1070-residue chain is Protocadherin-8 (1070 aa).

The first 29 residues, 1-29 (MSPAKRWGSPCLFPLQLFSLCWVLSVAQS), serve as a signal peptide directing secretion. 6 consecutive Cadherin domains span residues 30–135 (KTVR…APRF), 136–245 (PRAQ…SPAF), 247–354 (QGAV…APEI), 393–497 (QEAG…APIF), 498–609 (TKPV…SPIL), and 615–721 (ANGS…VPAS). Topologically, residues 30 to 747 (KTVRYSTFEE…SGPSLQWDTP (718 aa)) are extracellular. Asparagine 616 carries an N-linked (GlcNAc...) asparagine glycan. The span at 716–725 (SAVPASSGSP) shows a compositional bias: low complexity. The interval 716 to 740 (SAVPASSGSPEHSRPPGSRLAPSGP) is disordered. The chain crosses the membrane as a helical span at residues 748–768 (LIVIIVLAGSCTLLLAAIIAI). Residues 769-1070 (ATTCNRRKKE…SPKKGINENV (302 aa)) lie on the Cytoplasmic side of the membrane. 3 disordered regions span residues 777-859 (KEVR…TGES), 906-928 (REAE…DSDS), and 1046-1070 (IGVP…NENV). 2 stretches are compositionally biased toward basic and acidic residues: residues 780–790 (RKGGALREERP) and 906–921 (REAE…KGDS). Serine 1053 bears the Phosphoserine mark.

As to quaternary structure, the N-terminal extracellular domain forms homophilic interactions; these interactions activate p38 MAPK via TAOK2 and trigger endocytosis. Interacts with CDH2; this interaction may lead to CDH2 cointernalization. Interacts with CDH11. Interacts with TAOK2.

Its subcellular location is the cell membrane. The protein resides in the cell projection. It localises to the dendrite. The protein localises to the presynaptic cell membrane. It is found in the postsynaptic cell membrane. Its function is as follows. Calcium-dependent cell-adhesion protein. May play a role in activity-induced synaptic reorganization underlying long term memory. Could be involved in CDH2 internalization through TAOK2/p38 MAPK pathway. In hippocampal neurons, may play a role in the down-regulation of dendritic spines, maybe through its action on CDH2 endocytosis. This Mus musculus (Mouse) protein is Protocadherin-8 (Pcdh8).